Here is an 847-residue protein sequence, read N- to C-terminus: MASDSSLGNTNDGPPSPGENVSSPIENTYSSPAALHRRRRGRSSTPTQFATPPPPPSRLASSNSTPPTSRPSAARSKGRNGHGGGGGGGGGGDPGTPMSTDEPLPSSDDGEEDGGDDTTPTFVWGTNISVQDVKSAIEMFVKHFREARENSDDLFREGKYMVSIRKVIEIEGEWIDVDAFDVFDYDPDLYNKMVRYPLEVLAIFDIVLMDIVSTINRLFEKHVQVRIFNLRTSTSMRNLNPSDIEKMISLKGMIIRSSSIIPEIREAVFRCLVCGYFSDPIIVDRGKISEPPTCLKQECMTKNSMTLVHNRCRFADKQIVRLQETPDEIPEGGTPHTVSLLLHDKLVDNGKPGDRIEVTGIYRAMTVRVGPAHRTVKSVFKTYIDCLHIKKASKLRMSAEDPMDVDNSLRRVDEDVELDEEKLRKFQELSKQPDIYERLSRSLAPNIWELDDVKKGLLCQLFGGNALNLASGANFRGDINILLVGDPGTSKSQLLQYIHKLSPRGIYTSGRGSSAVGLTAYVAKDPETGETVLESGALVLSDRGICCIDEFDKMSDSARSMLHEVMEQQTVSIAKAGIIASLNARTSVLACANPSGSRYNPRLSVIENIHLPPTLLSRFDLIYLILDKPDEQTDRRLAKHIVALHFENAESAQEEAIDITTLTTYVSYARKNIHPKLSDEAAEELTRGYVELRKAGKFAGSSKKVITATPRQIESLIRLSEALARMRFSEWVEKHDVDEAFRLLRVAMQQSATDHATGTIDMDLINTGVSASERMRRDTFASSIRDIALEKMQIGGSSMRLSELLEELKKHGGNINTEIHLHDVRKAVATLASEGFLVAEGDRIKRV.

Polar residues predominate over residues 1-31; it reads MASDSSLGNTNDGPPSPGENVSSPIENTYSS. The tract at residues 1–123 is disordered; that stretch reads MASDSSLGNT…GGDDTTPTFV (123 aa). The span at 60–75 shows a compositional bias: low complexity; it reads ASSNSTPPTSRPSAAR. A compositionally biased stretch (gly residues) spans 81 to 94; that stretch reads GHGGGGGGGGGGDP. The segment at 271 to 299 adopts a C4-type zinc-finger fold; that stretch reads CLVCGYFSDPIIVDRGKISEPPTCLKQEC. An MCM domain is found at 435–641; it reads IYERLSRSLA…QTDRRLAKHI (207 aa). 485 to 492 contributes to the ATP binding site; that stretch reads GDPGTSKS. The short motif at 617–620 is the Arginine finger element; the sequence is SRFD.

Belongs to the MCM family. As to quaternary structure, component of the minichromosome maintenance (MCM) complex, a heterotetramer composed of MCM2, MCM3, MCM4, MCM5, MCM6 and MCM7. Interacts with ETG1. As to expression, expressed in shoot apex and flower buds.

The protein resides in the nucleus. The catalysed reaction is ATP + H2O = ADP + phosphate + H(+). In terms of biological role, probable component of the MCM2-7 complex (MCM complex) that may function as a DNA helicase and which is essential to undergo a single round of replication initiation and elongation per cell cycle in eukaryotic cells. In Arabidopsis thaliana (Mouse-ear cress), this protein is DNA replication licensing factor MCM4 (MCM4).